A 1468-amino-acid chain; its full sequence is DNA-directed RNA polymerase subunit beta (1468 aa).

This sequence belongs to the RNA polymerase beta chain family. As to quaternary structure, the RNAP catalytic core consists of 2 alpha, 1 beta, 1 beta' and 1 omega subunit. When a sigma factor is associated with the core the holoenzyme is formed, which can initiate transcription.

The catalysed reaction is RNA(n) + a ribonucleoside 5'-triphosphate = RNA(n+1) + diphosphate. Its function is as follows. DNA-dependent RNA polymerase catalyzes the transcription of DNA into RNA using the four ribonucleoside triphosphates as substrates. This chain is DNA-directed RNA polymerase subunit beta, found in Aquifex aeolicus (strain VF5).